The chain runs to 286 residues: 4-diphosphocytidyl-2-C-methyl-D-erythritol kinase (286 aa).

Residue Lys11 is part of the active site. Position 94 to 104 (94 to 104 (PMGGGIGGGSS)) interacts with ATP. Asp136 is a catalytic residue.

This sequence belongs to the GHMP kinase family. IspE subfamily.

The catalysed reaction is 4-CDP-2-C-methyl-D-erythritol + ATP = 4-CDP-2-C-methyl-D-erythritol 2-phosphate + ADP + H(+). It participates in isoprenoid biosynthesis; isopentenyl diphosphate biosynthesis via DXP pathway; isopentenyl diphosphate from 1-deoxy-D-xylulose 5-phosphate: step 3/6. Catalyzes the phosphorylation of the position 2 hydroxy group of 4-diphosphocytidyl-2C-methyl-D-erythritol. This chain is 4-diphosphocytidyl-2-C-methyl-D-erythritol kinase, found in Pseudomonas putida (strain W619).